Reading from the N-terminus, the 106-residue chain is uncharacterized protein (106 aa).

The next 3 helical transmembrane spans lie at 5-27 (IFVI…GIII), 42-64 (AVAA…LAYM), and 76-98 (LPYI…TNFF).

Its subcellular location is the cell membrane. This is an uncharacterized protein from Archaeoglobus fulgidus (strain ATCC 49558 / DSM 4304 / JCM 9628 / NBRC 100126 / VC-16).